The primary structure comprises 249 residues: Hydroxyacylglutathione hydrolase (249 aa).

Zn(2+)-binding residues include H53, H55, D57, H58, H110, D127, and H165.

Belongs to the metallo-beta-lactamase superfamily. Glyoxalase II family. As to quaternary structure, monomer. The cofactor is Zn(2+).

The enzyme catalyses an S-(2-hydroxyacyl)glutathione + H2O = a 2-hydroxy carboxylate + glutathione + H(+). It functions in the pathway secondary metabolite metabolism; methylglyoxal degradation; (R)-lactate from methylglyoxal: step 2/2. In terms of biological role, thiolesterase that catalyzes the hydrolysis of S-D-lactoyl-glutathione to form glutathione and D-lactic acid. The polypeptide is Hydroxyacylglutathione hydrolase (Buchnera aphidicola subsp. Baizongia pistaciae (strain Bp)).